The chain runs to 242 residues: Phosphoribosylaminoimidazole-succinocarboxamide synthase (242 aa).

The protein belongs to the SAICAR synthetase family.

The catalysed reaction is 5-amino-1-(5-phospho-D-ribosyl)imidazole-4-carboxylate + L-aspartate + ATP = (2S)-2-[5-amino-1-(5-phospho-beta-D-ribosyl)imidazole-4-carboxamido]succinate + ADP + phosphate + 2 H(+). The protein operates within purine metabolism; IMP biosynthesis via de novo pathway; 5-amino-1-(5-phospho-D-ribosyl)imidazole-4-carboxamide from 5-amino-1-(5-phospho-D-ribosyl)imidazole-4-carboxylate: step 1/2. This is Phosphoribosylaminoimidazole-succinocarboxamide synthase from Cyanothece sp. (strain PCC 7425 / ATCC 29141).